The chain runs to 132 residues: Hemoglobin subunit beta-1 (132 aa).

The region spanning 1–132 is the Globin domain; the sequence is WSKIDIDVCG…VVSALGRQYH (132 aa). 2 residues coordinate heme b: His49 and His78.

It belongs to the globin family. As to quaternary structure, hb 1 is a heterotetramer of two alpha-1 and two beta-1 chains. Hb 2 is a heterotetramer of two alpha-2 and two beta-1 chains. Red blood cells.

Involved in oxygen transport from gills to the various peripheral tissues. This Arctogadus glacialis (Arctic cod) protein is Hemoglobin subunit beta-1 (hbb1).